Reading from the N-terminus, the 350-residue chain is GDSL esterase/lipase At2g42990 (350 aa).

Residues 1–24 (MATHYLSPSILCIILTTLVSIAGA) form the signal peptide. Residue Ser-35 is the Nucleophile of the active site. N-linked (GlcNAc...) asparagine glycans are attached at residues Asn-98, Asn-117, and Asn-141. Active-site residues include Asp-325 and His-328.

It belongs to the 'GDSL' lipolytic enzyme family.

It is found in the secreted. This is GDSL esterase/lipase At2g42990 from Arabidopsis thaliana (Mouse-ear cress).